The following is a 1632-amino-acid chain: uncharacterized protein (1632 aa).

Positions 1-15 (MSNNKQTAAPAATSN) are enriched in polar residues. The disordered stretch occupies residues 1–23 (MSNNKQTAAPAATSNEKAENGAE). The Cytoplasmic portion of the chain corresponds to 1–63 (MSNNKQTAAP…TKDAFKGKYR (63 aa)). A helical membrane pass occupies residues 64–86 (VFYGNGLHTSIMFGAGTAALDLM). Over 87–1632 (TPGSFLPPFP…ESDGEEMSGE (1546 aa)) the chain is Extracellular. 2 N-linked (GlcNAc...) asparagine; by host glycosylation sites follow: asparagine 149 and asparagine 274. The tract at residues 516-538 (ELSSQLGDTDTKKEQKEKRSKQG) is disordered. N-linked (GlcNAc...) asparagine; by host glycosylation is found at asparagine 654, asparagine 719, and asparagine 797. Positions 838–890 (IKGTKKSDDGDSKTDGSGDMEDDFTSLAKMTNRKRKAGGKDGPSKKKKKDGAD) are disordered. Basic and acidic residues-rich tracts occupy residues 842-853 (KKSDDGDSKTDG) and 875-890 (GGKD…DGAD). N-linked (GlcNAc...) asparagine; by host glycans are attached at residues asparagine 1012, asparagine 1031, asparagine 1261, asparagine 1339, asparagine 1511, and asparagine 1546. The interval 1603–1632 (PSAMDVDEDEDEDMDDESDDESDGEEMSGE) is disordered. Acidic residues predominate over residues 1607 to 1632 (DVDEDEDEDMDDESDDESDGEEMSGE).

It is found in the host membrane. This is an uncharacterized protein from Ostreid herpesvirus 1 (isolate France) (OsHV-1).